Consider the following 602-residue polypeptide: Wings apart-like protein homolog 1 (602 aa).

Positions 34–66 (NKQKRSPGQTVSKRLHKKQRVVSNPDLSLPSSP) are disordered. The span at 54-66 (VVSNPDLSLPSSP) shows a compositional bias: polar residues. A WAPL domain is found at 160–492 (IQMKSIHELR…LGLVEESHEF (333 aa)).

This sequence belongs to the WAPL family.

The protein localises to the nucleus. It localises to the chromosome. In terms of biological role, regulator of sister chromatid cohesion in mitosis which negatively regulates cohesin association with chromatin. The protein is Wings apart-like protein homolog 1 (wpl1) of Schizosaccharomyces pombe (strain 972 / ATCC 24843) (Fission yeast).